The chain runs to 88 residues: Eclosion hormone (88 aa).

Residues 1–26 form the signal peptide; that stretch reads MANKLTAVIVVALAVAFMVNLDYANC. Disulfide bonds link Cys40/Cys64, Cys44/Cys60, and Cys47/Cys75.

The protein belongs to the insect eclosion hormone family.

Its subcellular location is the secreted. Functionally, neuropeptide that triggers the performance of ecdysis behaviors at the end of a molt. It triggers adult behavior patterns: larval, pupal and adult ecdysis, and plasticization during the molt. The chain is Eclosion hormone from Bombyx mori (Silk moth).